Reading from the N-terminus, the 73-residue chain is Large ribosomal subunit protein bL31 (73 aa).

Belongs to the bacterial ribosomal protein bL31 family. Type A subfamily. In terms of assembly, part of the 50S ribosomal subunit.

Binds the 23S rRNA. The protein is Large ribosomal subunit protein bL31 of Bartonella bacilliformis (strain ATCC 35685 / KC583 / Herrer 020/F12,63).